The chain runs to 1076 residues: Carbamoyl phosphate synthase large chain (1076 aa).

Residues 1–403 (MPKRTDIQSI…SLQKALRGLE (403 aa)) form a carboxyphosphate synthetic domain region. The ATP site is built by Arg129, Arg169, Gly175, Gly176, Glu208, Leu210, Glu215, Gly241, Ile242, His243, Gln285, and Glu299. One can recognise an ATP-grasp 1 domain in the interval 133–328 (DKAMKSIGLE…IAKVAAKLAV (196 aa)). Positions 285, 299, and 301 each coordinate Mg(2+). Mn(2+) is bound by residues Gln285, Glu299, and Asn301. Residues 404 to 553 (VGAAGLDEKV…YSTYDEECEA (150 aa)) are oligomerization domain. The segment at 554–935 (NPTDKDKIMV…AYAKAELGCG (382 aa)) is carbamoyl phosphate synthetic domain. The ATP-grasp 2 domain maps to 678 to 869 (QQAVQRLGLK…LAKIAARVMV (192 aa)). Arg714, Arg753, Leu755, Glu760, Gly785, Val786, His787, Ser788, Gln828, and Glu840 together coordinate ATP. The Mg(2+) site is built by Gln828, Glu840, and Asn842. Gln828, Glu840, and Asn842 together coordinate Mn(2+). Residues 936 to 1076 (SVYPEGGRAL…LHARVKANQA (141 aa)) enclose the MGS-like domain. The allosteric domain stretch occupies residues 936–1076 (SVYPEGGRAL…LHARVKANQA (141 aa)).

This sequence belongs to the CarB family. In terms of assembly, composed of two chains; the small (or glutamine) chain promotes the hydrolysis of glutamine to ammonia, which is used by the large (or ammonia) chain to synthesize carbamoyl phosphate. Tetramer of heterodimers (alpha,beta)4. It depends on Mg(2+) as a cofactor. The cofactor is Mn(2+).

The catalysed reaction is hydrogencarbonate + L-glutamine + 2 ATP + H2O = carbamoyl phosphate + L-glutamate + 2 ADP + phosphate + 2 H(+). It carries out the reaction hydrogencarbonate + NH4(+) + 2 ATP = carbamoyl phosphate + 2 ADP + phosphate + 2 H(+). The protein operates within amino-acid biosynthesis; L-arginine biosynthesis; carbamoyl phosphate from bicarbonate: step 1/1. It functions in the pathway pyrimidine metabolism; UMP biosynthesis via de novo pathway; (S)-dihydroorotate from bicarbonate: step 1/3. Its function is as follows. Large subunit of the glutamine-dependent carbamoyl phosphate synthetase (CPSase). CPSase catalyzes the formation of carbamoyl phosphate from the ammonia moiety of glutamine, carbonate, and phosphate donated by ATP, constituting the first step of 2 biosynthetic pathways, one leading to arginine and/or urea and the other to pyrimidine nucleotides. The large subunit (synthetase) binds the substrates ammonia (free or transferred from glutamine from the small subunit), hydrogencarbonate and ATP and carries out an ATP-coupled ligase reaction, activating hydrogencarbonate by forming carboxy phosphate which reacts with ammonia to form carbamoyl phosphate. The sequence is that of Carbamoyl phosphate synthase large chain from Vibrio cholerae serotype O1 (strain ATCC 39315 / El Tor Inaba N16961).